Reading from the N-terminus, the 334-residue chain is Cytoskeleton protein RodZ (334 aa).

Residues 1–111 (MNTEATHDQN…LGKRRKKRDG (111 aa)) are Cytoplasmic-facing. One can recognise an HTH cro/C1-type domain in the interval 19-71 (LRNAREQLGLSQQAVAERLCLKVSTVRDIEEDKAPSDLASTFLRGYIRSYARL). Residues 30–49 (QQAVAERLCLKVSTVRDIEE) constitute a DNA-binding region (H-T-H motif). Residues 112 to 132 (WLMSFTWLVLFVVVGLTGAWW) form a helical; Signal-anchor for type II membrane protein membrane-spanning segment. Topologically, residues 133-334 (WQNHKAQQEE…TLNAEPTPAQ (202 aa)) are periplasmic. Disordered stretches follow at residues 155–207 (NADK…ATQN) and 221–241 (ATSA…SQAG). Residues 176–207 (TTPAQTAPAPATPVDSTAATQTPAATATATQN) show a composition bias toward low complexity.

It belongs to the RodZ family.

The protein localises to the cell inner membrane. Functionally, cytoskeletal protein that is involved in cell-shape control through regulation of the length of the long axis. The protein is Cytoskeleton protein RodZ of Salmonella schwarzengrund (strain CVM19633).